The chain runs to 224 residues: Ribose-5-phosphate isomerase A (224 aa).

Substrate-binding positions include 32 to 35 (TGST), 85 to 88 (DGAD), and 98 to 101 (KGGG). E107 acts as the Proton acceptor in catalysis. Position 125 (K125) interacts with substrate.

This sequence belongs to the ribose 5-phosphate isomerase family. In terms of assembly, homodimer.

The catalysed reaction is aldehydo-D-ribose 5-phosphate = D-ribulose 5-phosphate. It functions in the pathway carbohydrate degradation; pentose phosphate pathway; D-ribose 5-phosphate from D-ribulose 5-phosphate (non-oxidative stage): step 1/1. Catalyzes the reversible conversion of ribose-5-phosphate to ribulose 5-phosphate. This Pseudomonas entomophila (strain L48) protein is Ribose-5-phosphate isomerase A.